The following is a 140-amino-acid chain: Putative pre-16S rRNA nuclease (140 aa).

The protein belongs to the YqgF nuclease family.

Its subcellular location is the cytoplasm. Its function is as follows. Could be a nuclease involved in processing of the 5'-end of pre-16S rRNA. This Serratia proteamaculans (strain 568) protein is Putative pre-16S rRNA nuclease.